The following is a 305-amino-acid chain: Thymidylate synthase (305 aa).

DUMP contacts are provided by residues Arg-26 and 160–161; that span reads RR. Catalysis depends on Cys-180, which acts as the Nucleophile. DUMP-binding positions include 207 to 210, Asn-218, and 248 to 250; these read RSCD and HLY. Residue Asp-210 coordinates (6R)-5,10-methylene-5,6,7,8-tetrahydrofolate. Position 304 (Ala-304) interacts with (6R)-5,10-methylene-5,6,7,8-tetrahydrofolate.

The protein belongs to the thymidylate synthase family. Bacterial-type ThyA subfamily. Homodimer.

The protein localises to the cytoplasm. The catalysed reaction is dUMP + (6R)-5,10-methylene-5,6,7,8-tetrahydrofolate = 7,8-dihydrofolate + dTMP. Its pathway is pyrimidine metabolism; dTTP biosynthesis. Functionally, catalyzes the reductive methylation of 2'-deoxyuridine-5'-monophosphate (dUMP) to 2'-deoxythymidine-5'-monophosphate (dTMP) while utilizing 5,10-methylenetetrahydrofolate (mTHF) as the methyl donor and reductant in the reaction, yielding dihydrofolate (DHF) as a by-product. This enzymatic reaction provides an intracellular de novo source of dTMP, an essential precursor for DNA biosynthesis. In Sinorhizobium fredii (strain NBRC 101917 / NGR234), this protein is Thymidylate synthase.